Here is a 331-residue protein sequence, read N- to C-terminus: MAKDEKKAALEAALKKIEKNFGKGAVMRMGEKVDTQISTVPSGSLALDAALGVGGYPRGRIVEIYGPESSGKTTVALHAVAEVQKRGGTAAYIDAENAMDPAYAEALGVDIDQLILSQPNTGEEGLQIADTLISSGAIDIVVVDSVAALVPRAEIEGEMGDSHVGLQARLMSQALRKLSGTIAKTKTIAIFINQIREKVGVMFGNPETTPGGRALKFYSTIRLEVRRAEQIKQSTNVIGNRVKIKVVKNKVAPPFKVAEVDIMYGQGISQSGELLDMAADQDIVDKAGAWYSYHGEKIGQGRENAKKYLEEHPDVSEDIQTQVRKGLRNRC.

Glycine 66 to threonine 73 contributes to the ATP binding site.

This sequence belongs to the RecA family.

Its subcellular location is the cytoplasm. Functionally, can catalyze the hydrolysis of ATP in the presence of single-stranded DNA, the ATP-dependent uptake of single-stranded DNA by duplex DNA, and the ATP-dependent hybridization of homologous single-stranded DNAs. It interacts with LexA causing its activation and leading to its autocatalytic cleavage. The sequence is that of Protein RecA from Lactobacillus delbrueckii subsp. bulgaricus (strain ATCC 11842 / DSM 20081 / BCRC 10696 / JCM 1002 / NBRC 13953 / NCIMB 11778 / NCTC 12712 / WDCM 00102 / Lb 14).